The primary structure comprises 426 residues: Coiled-coil domain-containing protein 86 (426 aa).

Residues 1–426 (MDTPLRRSRR…QPPQRPVAKV (426 aa)) are disordered. At S18 the chain carries Phosphoserine. The span at 33–49 (ALVDFKSNSEETGELKS) shows a compositional bias: basic and acidic residues. Residues 55–145 (LSLPSPGPQP…SLPSPGPQPE (91 aa)) show a composition bias toward pro residues. S59 is subject to Phosphoserine. T66 carries the phosphothreonine modification. 11 positions are modified to phosphoserine: S67, S70, S161, S172, S183, S191, S194, S225, S252, S253, and S283. Residues 241-255 (QPAQELTVQAPSSPE) show a composition bias toward polar residues. A compositionally biased stretch (basic residues) spans 304-320 (GKPKSGRVWKDRSKKRF). Residues 339-383 (ERQERKLAKDFARHLEEEKQRRRQEKKERRAENLRRRLENERKAE) are compositionally biased toward basic and acidic residues. A coiled-coil region spans residues 346-389 (AKDFARHLEEEKQRRRQEKKERRAENLRRRLENERKAEIVQVIR). Residues 392–402 (AKLKKAKKKQL) show a composition bias toward basic residues. R408 bears the Citrulline mark.

Citrullinated by PADI4. As to expression, highly expressed in testis. Also expressed in heart, liver, kidney.

The protein resides in the nucleus. It localises to the chromosome. It is found in the nucleolus. In terms of biological role, required for proper chromosome segregation during mitosis and error-free mitotic progression. This Mus musculus (Mouse) protein is Coiled-coil domain-containing protein 86.